The sequence spans 138 residues: Small ribosomal subunit protein uS11c (138 aa).

The interval 1 to 22 (MTKPIPRIGSRRSGRIGSRKAG) is disordered. Basic residues predominate over residues 9–22 (GSRRSGRIGSRKAG).

This sequence belongs to the universal ribosomal protein uS11 family. As to quaternary structure, part of the 30S ribosomal subunit.

Its subcellular location is the plastid. It is found in the chloroplast. In Piper cenocladum (Ant piper), this protein is Small ribosomal subunit protein uS11c.